We begin with the raw amino-acid sequence, 279 residues long: MTKADIIFKENIRKIMEEGVFSENARPRYKDGNVANSKYVTGAFAEYDLSKGEFPITTLRPIPIKSAIKEILWIYQDQTNDLSVLQEKYGVQYWNDWEVEGTGTIGERYGAIVKKHDIISKILKQLEENPWNRRNVISLWDYEAFDQSAGLLPCAFQTLFDVRRVDGEIYLDATLTQRSNDMLVAHHINAMQYVALQMMIAKHFGWKVGKFFYFINNLHIYDNQFEQAEELLRRTPSEVEPRLVLNVPDGTNFFDIRAEDFELVDYNPVKPQLKFDLAI.

Position 133–134 (133–134 (RR)) interacts with dUMP. Cysteine 154 acts as the Nucleophile in catalysis. DUMP contacts are provided by residues 178–181 (RSND), asparagine 189, and 219–221 (HIY). Aspartate 181 contributes to the (6R)-5,10-methylene-5,6,7,8-tetrahydrofolate binding site. Alanine 278 contributes to the (6R)-5,10-methylene-5,6,7,8-tetrahydrofolate binding site.

Belongs to the thymidylate synthase family. Bacterial-type ThyA subfamily. Homodimer.

It is found in the cytoplasm. The enzyme catalyses dUMP + (6R)-5,10-methylene-5,6,7,8-tetrahydrofolate = 7,8-dihydrofolate + dTMP. It participates in pyrimidine metabolism; dTTP biosynthesis. Its function is as follows. Catalyzes the reductive methylation of 2'-deoxyuridine-5'-monophosphate (dUMP) to 2'-deoxythymidine-5'-monophosphate (dTMP) while utilizing 5,10-methylenetetrahydrofolate (mTHF) as the methyl donor and reductant in the reaction, yielding dihydrofolate (DHF) as a by-product. This enzymatic reaction provides an intracellular de novo source of dTMP, an essential precursor for DNA biosynthesis. The protein is Thymidylate synthase of Streptococcus suis (strain 05ZYH33).